The sequence spans 89 residues: Probable Fe(2+)-trafficking protein (89 aa).

This sequence belongs to the Fe(2+)-trafficking protein family.

In terms of biological role, could be a mediator in iron transactions between iron acquisition and iron-requiring processes, such as synthesis and/or repair of Fe-S clusters in biosynthetic enzymes. This chain is Probable Fe(2+)-trafficking protein, found in Acinetobacter baumannii (strain SDF).